The primary structure comprises 226 residues: Uridylate kinase (226 aa).

ATP is bound at residue 9–13 (KVSGK). G46 contacts UMP. ATP is bound by residues G47 and R51. Residues D68 and 116 to 122 (FQPGQST) contribute to the UMP site. Positions 142, 148, and 151 each coordinate ATP.

This sequence belongs to the UMP kinase family. Homohexamer.

The protein resides in the cytoplasm. The enzyme catalyses UMP + ATP = UDP + ADP. Its pathway is pyrimidine metabolism; CTP biosynthesis via de novo pathway; UDP from UMP (UMPK route): step 1/1. With respect to regulation, inhibited by UTP. In terms of biological role, catalyzes the reversible phosphorylation of UMP to UDP. In Hyperthermus butylicus (strain DSM 5456 / JCM 9403 / PLM1-5), this protein is Uridylate kinase.